We begin with the raw amino-acid sequence, 66 residues long: Large ribosomal subunit protein uL29 (66 aa).

The protein belongs to the universal ribosomal protein uL29 family.

The polypeptide is Large ribosomal subunit protein uL29 (Thermosipho africanus (strain TCF52B)).